The chain runs to 141 residues: Lutropin subunit beta (141 aa).

The first 20 residues, 1–20 (MEMLQGLLLWLLLNVGGVWA), serve as a signal peptide directing secretion. Cystine bridges form between cysteine 29/cysteine 77, cysteine 43/cysteine 92, cysteine 46/cysteine 130, cysteine 54/cysteine 108, cysteine 58/cysteine 110, and cysteine 113/cysteine 120. Residue asparagine 33 is glycosylated (N-linked (GlcNAc...) asparagine).

This sequence belongs to the glycoprotein hormones subunit beta family. As to quaternary structure, heterodimer of a common alpha chain and a unique beta chain which confers biological specificity to thyrotropin, lutropin, follitropin and gonadotropin.

The protein localises to the secreted. Promotes spermatogenesis and ovulation by stimulating the testes and ovaries to synthesize steroids. This chain is Lutropin subunit beta (LHB), found in Ailurus fulgens (Himalayan red panda).